The sequence spans 320 residues: Ferrochelatase (320 aa).

Fe cation contacts are provided by H194 and E275.

Belongs to the ferrochelatase family. Monomer.

It localises to the cytoplasm. The enzyme catalyses heme b + 2 H(+) = protoporphyrin IX + Fe(2+). The protein operates within porphyrin-containing compound metabolism; protoheme biosynthesis; protoheme from protoporphyrin-IX: step 1/1. Catalyzes the ferrous insertion into protoporphyrin IX. The chain is Ferrochelatase from Escherichia coli O157:H7 (strain EC4115 / EHEC).